The following is a 248-amino-acid chain: 1-(5-phosphoribosyl)-5-[(5-phosphoribosylamino)methylideneamino] imidazole-4-carboxamide isomerase (248 aa).

Catalysis depends on D7, which acts as the Proton acceptor. Residue D129 is the Proton donor of the active site.

Belongs to the HisA/HisF family.

The protein localises to the cytoplasm. The enzyme catalyses 1-(5-phospho-beta-D-ribosyl)-5-[(5-phospho-beta-D-ribosylamino)methylideneamino]imidazole-4-carboxamide = 5-[(5-phospho-1-deoxy-D-ribulos-1-ylimino)methylamino]-1-(5-phospho-beta-D-ribosyl)imidazole-4-carboxamide. It participates in amino-acid biosynthesis; L-histidine biosynthesis; L-histidine from 5-phospho-alpha-D-ribose 1-diphosphate: step 4/9. In Aeromonas salmonicida (strain A449), this protein is 1-(5-phosphoribosyl)-5-[(5-phosphoribosylamino)methylideneamino] imidazole-4-carboxamide isomerase.